A 465-amino-acid chain; its full sequence is tRNA modification GTPase MnmE (465 aa).

Positions 25, 87, and 126 each coordinate (6S)-5-formyl-5,6,7,8-tetrahydrofolate. The TrmE-type G domain maps to 222–386 (TIRVVLRGLP…LIERLVQFAE (165 aa)). Residues 232-237 (NAGKSR), 251-257 (TDQAGTT), and 276-279 (DTAG) each bind GTP. Residues Ser236 and Thr257 each coordinate Mg(2+). Lys465 lines the (6S)-5-formyl-5,6,7,8-tetrahydrofolate pocket.

The protein belongs to the TRAFAC class TrmE-Era-EngA-EngB-Septin-like GTPase superfamily. TrmE GTPase family. Homodimer. Heterotetramer of two MnmE and two MnmG subunits. It depends on K(+) as a cofactor.

Its subcellular location is the cytoplasm. Its function is as follows. Exhibits a very high intrinsic GTPase hydrolysis rate. Involved in the addition of a carboxymethylaminomethyl (cmnm) group at the wobble position (U34) of certain tRNAs, forming tRNA-cmnm(5)s(2)U34. This is tRNA modification GTPase MnmE from Rhodopirellula baltica (strain DSM 10527 / NCIMB 13988 / SH1).